Reading from the N-terminus, the 2472-residue chain is MSGSTQPVAQTWRAAEPRYPPHGISYPVQIARSHTDVGLLEYQHHPRDYTSHLSPGSIIQPQRRRPSLLSEFQPGSERSQELHLRPESRTFLPELGKPDIEFTESKRPRLELLPDTLLRPSPLLATGQPSGSEDLTKDRSLAGKLEPVSPPSPPHADPELELAPSRLSKEELIQNMDRVDREITMVEQQISKLKKKQQQLEEEAAKPPEPEKPVSPPPIESKHRSLVQIIYDENRKKAEAAHRILEGLGPQVELPLYNQPSDTRQYHENIKINQAMRKKLILYFKRRNHARKQWEQRFCQRYDQLMEAWEKKVERIENNPRRRAKESKVREYYEKQFPEIRKQRELQERMQSRVGQRGSGLSMSAARSEHEVSEIIDGLSEQENLEKQMRQLAVIPPMLYDADQQRIKFINMNGLMDDPMKVYKDRQVTNMWSEQERDTFREKFMQHPKNFGLIASFLERKTVAECVLYYYLTKKNENYKSLVRRSYRRRGKSQQQQQQQQQQQQQQMARSSQEEKEEKEKEKEADKEEEKQDAENEKEELSKEKTDDTSGEDNDEKEAVASKGRKTANSQGRRKGRITRSMANEANHEETATPQQSSELASMEMNESSRWTEEEMETAKKGLLEHGRNWSAIARMVGSKTVSQCKNFYFNYKKRQNLDEILQQHKLKMEKERNARRKKKKTPAAASEETAFPPAAEDEEMEASGASANEEELAEEAEASQASGNEVPRVGECSGPAAVNNSSDTESVPSPRSEATKDTGPKPTGTEALPAATQPPVPPPEEPAVAPAEPSPVPDASGPPSPEPSPSPAAPPATVDKDEQEAPAAPAPQTEDAKEQKSEAEEIDVGKPEEPEASEEPPESVKSDHKEETEEEPEDKAKGTEAIETVSEAPLKVEEAGSKAAVTKGSSSGATQDSDSSATCSADEVDEPEGGDKGRLLSPRPSLLTPAGDPRASTSPQKPLDLKQLKQRAAAIPPIVTKVHEPPREDTVPPKPVPPVPPPTQHLQPEGDVSQQSGGSPRGKSRSPVPPAEKEAEKPAFFPAFPTEGPKLPTEPPRWSSGLPFPIPPREVIKTSPHAADPSAFSYTPPGHPLPLGLHDSARPVLPRPPISNPPPLISSAKHPGVLERQLGAISQQGMSVQLRVPHSEHAKAPMGPLTMGLPLAVDPKKLGTALGSATSGSITKGLPSTRAADGPSYRGSITHGTPADVLYKGTISRIVGEDSPSRLDRAREDTLPKGHVIYEGKKGHVLSYEGGMSVSQCSKEDGRSSSGPPHETAAPKRTYDMMEGRVGRTVTSASIEGLMGRAIPEQHSPHLKEQHHIRGSITQGIPRSYVEAQEDYLRREAKLLKREGTPPPPPPPRDLTETYKPRPLDPLGPLKLKPTHEGVVATVKEAGRSIHEIPREELRRTPELPLAPRPLKEGSITQGTPLKYDSGAPSTGTKKHDVRSIIGSPGRPFPALHPLDIMADARALERACYEESLKSRSGTSSGAGGSITRGAPVVVPELGKPRQSPLTYEDHGAPFTSHLPRGSPVTTREPTPRLQEGSLLSSKASQDRKLTSTPREIAKSPHSTVPEHHPHPISPYEHLLRGVTGVDLYRGHIPLAFDPTSIPRGIPLEAAAAAYYLPRHLAPSPTYPHLYPPYLIRGYPDTAALENRQTIINDYITSQQMHHNAASAMAQRADMLRGLSPRESSLALNYAAGPRGIIDLSQVPHLPVLVPPTPGTPATAIDRLAYLPTAPPPFSSRHSSSPLSPGGPTHLAKPTATSSSERERERERERDKSILTSTTTVEHAPIWRPGTEQSSGAGGSSRPASHTHQHSPISPRTQDALQQRPSVLHNTSMKGVVTSVEPGTPTVLRWARSTSTSSPVRPAATFPPATHCPLGGTLEGVYPTLMEPVLLPKETSRVARPERPRVDAGHAFLTKPPAREPASSPSKSSEPRSLAPPSSSHTAIARTPAKNLAPHHASPDPPAPTSASDLHREKTQSKPFSIQELELRSLGYHSGAGYSPDGVEPISPVSSPSLTHDKGLSKPLEELEKSHLEGELRHKQPGPMKLSAEAAHLPHLRPLPESQPSSSPLLQTAPGIKGHQRVVTLAQHISEVITQDYTRHHPQQLSGPLPAPLYSFPGASCPVLDLRRPPSDLYLPPPDHGTPARGSPHSEGGKRSPEPSKTSVLGSSEDAIEPVSPPEGMTEPGHARSTAYPLLYRDGEQGEPRMGSKSPGNTSQPPAFFSKLTESNSAMVKSKKQEINKKLNTHNRNEPEYNIGQPGTEIFNMPAITGAGLMTCRSQAVQEHASTNMGLEAIIRKALMGKYDQWEEPPPLGANAFNPLNASASLPAAAMPITTADGRSDHALTSPGGGGKAKVSGRPSSRKAKSPAPGLASGDRPPSVSSVHSEGDCNRRTPLTNRVWEDRPSSAGSTPFPYNPLIMRLQAGVMASPPPPGLAAGSGPLAGPHHAWDEEPKPLLCSQYETLSDSE.

Disordered regions lie at residues 1-20 (MSGS…PRYP), 47-168 (RDYT…SRLS), and 190-220 (ISKL…PPIE). Arg18 carries the asymmetric dimethylarginine modification. The span at 51-60 (SHLSPGSIIQ) shows a compositional bias: polar residues. A phosphoserine mark is found at Ser54 and Ser67. 2 stretches are compositionally biased toward basic and acidic residues: residues 78-88 (RSQELHLRPES) and 96-112 (GKPD…RLEL). Ser149 and Ser152 each carry phosphoserine. The stretch at 165 to 207 (SRLSKEELIQNMDRVDREITMVEQQISKLKKKQQQLEEEAAKP) forms a coiled coil. A compositionally biased stretch (basic and acidic residues) spans 203-212 (EAAKPPEPEK). A Phosphoserine modification is found at Ser215. The tract at residues 254–312 (LPLYNQPSDTRQYHENIKINQAMRKKLILYFKRRNHARKQWEQRFCQRYDQLMEAWEKK) is interaction with SIN3A/B. A deacetylase activation domain (DAD) region spans residues 389–480 (MRQLAVIPPM…YLTKKNENYK (92 aa)). Positions 427–478 (QVTNMWSEQERDTFREKFMQHPKNFGLIASFLERKTVAECVLYYYLTKKNEN) constitute an SANT 1 domain. The 1D-myo-inositol 1,4,5,6-tetrakisphosphate site is built by Lys449, Tyr470, and Tyr471. Disordered stretches follow at residues 487 to 618 (YRRR…EMET), 665 to 1107 (HKLK…RPPI), and 1173 to 1197 (SATS…YRGS). The stretch at 492–560 (KSQQQQQQQQ…GEDNDEKEAV (69 aa)) forms a coiled coil. Ser493 carries the post-translational modification Phosphoserine. Low complexity predominate over residues 494-507 (QQQQQQQQQQQQQQ). Over residues 512–548 (SQEEKEEKEKEKEADKEEEKQDAENEKEELSKEKTDD) the composition is skewed to basic and acidic residues. Position 549 is a phosphothreonine (Thr549). Ser550 is subject to Phosphoserine. Over residues 592–609 (ATPQQSSELASMEMNESS) the composition is skewed to polar residues. The region spanning 606-657 (NESSRWTEEEMETAKKGLLEHGRNWSAIARMVGSKTVSQCKNFYFNYKKRQN) is the SANT 2 domain. A coiled-coil region spans residues 658–682 (LDEILQQHKLKMEKERNARRKKKKT). Over residues 709-718 (NEEELAEEAE) the composition is skewed to acidic residues. The span at 739–750 (VNNSSDTESVPS) shows a compositional bias: polar residues. 2 positions are modified to phosphoserine: Ser747 and Ser750. Composition is skewed to pro residues over residues 773–782 (TQPPVPPPEE) and 789–811 (EPSP…PAAP). Basic and acidic residues-rich tracts occupy residues 831-850 (EDAK…KPEE) and 859-868 (ESVKSDHKEE). Residue Lys878 is modified to N6-acetyllysine. Residues 905-919 (GSSSGATQDSDSSAT) are compositionally biased toward low complexity. Position 938 is a phosphoserine (Ser938). The residue at position 945 (Thr945) is a Phosphothreonine. Ser955 carries the phosphoserine modification. The residue at position 958 (Lys958) is an N6-acetyllysine. Residues 978-988 (KVHEPPREDTV) are compositionally biased toward basic and acidic residues. Residues 989–1000 (PPKPVPPVPPPT) are compositionally biased toward pro residues. The span at 1090-1101 (LPLGLHDSARPV) shows a compositional bias: low complexity. 2 positions are modified to N6-acetyllysine: Lys1181 and Lys1209. Ser1220 is modified (phosphoserine). Disordered regions lie at residues 1254-1277 (SVSQ…AAPK), 1345-1378 (LKRE…LKLK), and 1410-1443 (PLAP…KHDV). At Thr1350 the chain carries Phosphothreonine. Positions 1359 to 1368 (DLTETYKPRP) are enriched in basic and acidic residues. Phosphoserine is present on residues Ser1449, Ser1509, and Ser1565. The tract at residues 1479–1578 (KSRSGTSSGA…TVPEHHPHPI (100 aa)) is disordered. Arg1624 is modified (asymmetric dimethylarginine). Residues 1734–1826 (TAPPPFSSRH…PISPRTQDAL (93 aa)) are disordered. Over residues 1740 to 1753 (SSRHSSSPLSPGGP) the composition is skewed to low complexity. 2 positions are modified to phosphoserine: Ser1746 and Ser1749. Basic and acidic residues predominate over residues 1765 to 1778 (SERERERERERDKS). Polar residues predominate over residues 1807–1826 (RPASHTHQHSPISPRTQDAL). Ser1819 carries the phosphoserine modification. Arg1854 bears the Omega-N-methylarginine mark. 3 disordered regions span residues 1857–1878 (RSTS…THCP), 1898–1986 (KETS…KPFS), and 2001–2078 (AGYS…LQTA). The span at 1899–1913 (ETSRVARPERPRVDA) shows a compositional bias: basic and acidic residues. Lys1920 carries the N6-acetyllysine modification. The segment covering 1925 to 1938 (EPASSPSKSSEPRS) has biased composition (low complexity). At Ser1963 the chain carries Phosphoserine. At Lys1983 the chain carries N6-acetyllysine. Ser2004, Ser2012, Ser2015, Ser2016, and Ser2018 each carry phosphoserine. Thr2020 carries the post-translational modification Phosphothreonine. Basic and acidic residues predominate over residues 2020–2043 (THDKGLSKPLEELEKSHLEGELRH). Ser2035 is modified (phosphoserine). The span at 2064-2075 (LPESQPSSSPLL) shows a compositional bias: low complexity. Residues 2086 to 2090 (RVVTL) are required for interaction with RARA in the absence of its ligand. The CORNR box of ID1 motif lies at 2094 to 2098 (ISEVI). Residues 2132 to 2226 (RRPPSDLYLP…GNTSQPPAFF (95 aa)) are disordered. A phosphoserine mark is found at Ser2161, Ser2181, and Ser2215. The CORNR box of ID2 signature appears at 2296–2300 (LEAII). The interval 2343–2459 (GRSDHALTSP…HHAWDEEPKP (117 aa)) is disordered. Ser2371 carries the phosphoserine modification. Residues 2439-2450 (LAAGSGPLAGPH) show a composition bias toward low complexity.

Belongs to the N-CoR nuclear receptor corepressors family. As to quaternary structure, forms a large corepressor complex that contains SIN3A/B and histone deacetylases HDAC1 and HDAC2. This complex associates with the thyroid (TR) and the retinoid acid receptors (RAR) in the absence of ligand, and may stabilize their interaction with TFIIB. Interacts directly with RARA in the absence of ligand; the interaction represses RARA activity. Interacts (isoform SMRT) with HDAC10. Interacts with MINT. Component of the N-Cor repressor complex, at least composed of NCOR1, NCOR2, HDAC3, TBL1X, TBL1R, CORO2A and GPS2. Interacts with CBFA2T3 and ATXN1L. Interacts with RARB; the interaction is weak and does not repress RARB transactivational activity. Interacts (via 1D-myo-inositol 1,4,5,6-tetrakisphosphate) with HDAC3; promoting the histone deacetylase activity of HDAC3. Interacts with HDAC7 and C1D. Interacts with NR4A2; this interaction increases in the absence of PITX3. Interacts with BCL6 (via the BTB domain), required for BCL6 transcriptional repressor activity on a subset of target genes. Forms ternary complexes with BCOR and BCL6 on target gene promoters but, on enhancer elements, interacts with BCL6 and HDAC3 to repress proximal gene expression. May interact with DEAF1. Interacts with RXRA. Interacts with MECP2. Interacts with ZBTB7A. Interacts with AR. Interacts with TBL1Y. Interacts with SANBR (via the BTB domain). In terms of tissue distribution, ubiquitous. Also widely expressed in early embryos.

It localises to the nucleus. Transcriptional corepressor that mediates the transcriptional repression activity of some nuclear receptors by promoting chromatin condensation, thus preventing access of the basal transcription. Acts by recruiting chromatin modifiers, such as histone deacetylases HDAC1, HDAC2 and HDAC3. Required to activate the histone deacetylase activity of HDAC3. Involved in the regulation BCL6-dependent of the germinal center (GC) reactions, mainly through the control of the GC B-cells proliferation and survival. Recruited by ZBTB7A to the androgen response elements/ARE on target genes, negatively regulates androgen receptor signaling and androgen-induced cell proliferation. The protein is Nuclear receptor corepressor 2 (Ncor2) of Mus musculus (Mouse).